The primary structure comprises 246 residues: D-erythrulose reductase (246 aa).

13–41 (LVTGAGKGIGRAVAVALCKAGARVTALSR) lines the NADP(+) pocket. Residue Ser138 participates in substrate binding. Tyr151 (proton acceptor) is an active-site residue. Lys155 provides a ligand contact to NADP(+).

The protein belongs to the short-chain dehydrogenases/reductases (SDR) family. In terms of assembly, homotetramer. The N-terminus is blocked. Highly expressed in kidney, and also found in high amounts in liver and testis. Low expression seen in all other tissues tested.

It is found in the cytoplasm. It catalyses the reaction D-threitol + NADP(+) = D-erythrulose + NADPH + H(+). The enzyme catalyses xylitol + NADP(+) = L-xylulose + NADPH + H(+). Its function is as follows. Catalyzes the reduction of D-erythrulose to D-threitol with the concomitant oxidation of NAD(P)H to NAD(P)(+). NADH is less effective than NADPH. May also catalyze the reduction of L-xylulose. The polypeptide is D-erythrulose reductase (DER) (Gallus gallus (Chicken)).